The chain runs to 297 residues: Protein LRATD1 (297 aa).

Ser38 is modified (phosphoserine). Positions 138 to 233 (PAPEPPAPAP…CRFGKREFKA (96 aa)) constitute an LRAT domain.

The protein belongs to the LRATD family.

It localises to the cytoplasm. In terms of biological role, may play a role in cell morphology and motility. The protein is Protein LRATD1 (LRATD1) of Bos taurus (Bovine).